Reading from the N-terminus, the 131-residue chain is UPF0342 protein DSY1594 (131 aa).

The protein belongs to the UPF0342 family.

This chain is UPF0342 protein DSY1594, found in Desulfitobacterium hafniense (strain Y51).